A 90-amino-acid polypeptide reads, in one-letter code: UPF0237 protein NMA1909 (90 aa).

The region spanning Val5–Ile83 is the ACT domain.

The protein belongs to the UPF0237 family.

The sequence is that of UPF0237 protein NMA1909 from Neisseria meningitidis serogroup A / serotype 4A (strain DSM 15465 / Z2491).